The following is a 452-amino-acid chain: Multifunctional glycoside hydrolase (452 aa).

Substrate contacts are provided by Gln-17, His-118, and Asn-162. Glu-163 serves as the catalytic Proton donor. Residue Tyr-303 participates in substrate binding. The Nucleophile role is filled by Glu-361. Residues Trp-407 and Glu-414–Trp-415 contribute to the substrate site.

Belongs to the glycosyl hydrolase 1 family. As to quaternary structure, monomer. Homotrimer.

The enzyme catalyses Hydrolysis of terminal, non-reducing beta-D-glucosyl residues with release of beta-D-glucose.. It carries out the reaction Hydrolysis of terminal non-reducing beta-D-galactose residues in beta-D-galactosides.. The catalysed reaction is Hydrolysis of (1-&gt;4)-beta-D-xylans, to remove successive D-xylose residues from the non-reducing termini.. It catalyses the reaction Hydrolysis of (1-&gt;4)-linkages in (1-&gt;4)-beta-D-glucans, to remove successive glucose units.. The enzyme catalyses Hydrolysis of (1-&gt;4)-beta-D-glucosidic linkages in cellulose and cellotetraose, releasing cellobiose from the non-reducing ends of the chains.. It functions in the pathway glycan metabolism; beta-D-glucan degradation. It participates in glycan metabolism; cellulose degradation. With respect to regulation, slight activation by Mn(2+), Ni(2+) and K(+). Slight inhibition by Fe(3+), Zn(2+), Co(2+), Mg(2+), Cu(2+), Na(+) and NH4(+). Has high beta-D-glucosidase, exoglucanase, beta-D-xylosidase, beta-D-galactosidase, and transgalactosylation activities in vitro. Has a very broad substrate specificity with the highest activity with p-nitrophenyl beta-D-galactopyranoside (pNPGal) as substrate. Active with pNP-beta-D-glucopyranoside (pNPGlu), pNP-beta-D-cellobioside (pNPC), lactose, pNP-beta-D-xylopyranoside (pNPX) and cellobiose in the order of decreasing activity, respectively. Very low activity with soluble polysaccharides synanthrin and locust bean gum. Very low, but detectable activity with insoluble substrates such as cotton and filter paper. No activity with pNP-alpha-L-arabinofuranoside (pNPAr) or carboxymethylcellulose (CMC) as substrates. Synthesizes galactooligosaccharides (GalOS) from lactose. Hydrolyzes pretreated corn stover releasing both glucose and xylose. This multifunctional enzyme may provide C.owensensis the benefit of utilizing a wide variety of available carbon sources in its natural growing environment as the ability to convert a wide range of soluble oligosaccharides to monoses is required in order to assimilate them. The polypeptide is Multifunctional glycoside hydrolase (Caldicellulosiruptor owensensis (strain ATCC 700167 / DSM 13100 / OL)).